The sequence spans 415 residues: Homoserine O-succinyltransferase (415 aa).

An AB hydrolase-1 domain is found at 69-383 (NAVLVCHALN…PHGHDAFLLD (315 aa)). Ser-175 serves as the catalytic Nucleophile. Substrate is bound at residue Arg-245. Catalysis depends on residues Asp-344 and His-377. Residue Asp-378 participates in substrate binding.

This sequence belongs to the AB hydrolase superfamily. MetX family. In terms of assembly, homodimer.

The protein resides in the cytoplasm. It catalyses the reaction L-homoserine + succinyl-CoA = O-succinyl-L-homoserine + CoA. Its pathway is amino-acid biosynthesis; L-methionine biosynthesis via de novo pathway; O-succinyl-L-homoserine from L-homoserine: step 1/1. Transfers a succinyl group from succinyl-CoA to L-homoserine, forming succinyl-L-homoserine. This Bordetella parapertussis (strain 12822 / ATCC BAA-587 / NCTC 13253) protein is Homoserine O-succinyltransferase.